Reading from the N-terminus, the 342-residue chain is MRCLIVCENLEMLNLSLAKTYKDYFKIGAAVTAKDLEGVHRDILLKHFNSLTPENAMKFENIHPEEQRYNFEEVARIKEFAIKNDMKLRGHTFVWHNQTPGWVFLDKNGEEASKELVIERLREHIKTLCERYKDVVYAWDVVNEAVEDKTEKLLRESNWRKIIGDDYIKIAFEIAREYAGDAKLFYNDYNNEMPYKLEKTYKVLKELLERGTPIDGIGIQAHWNIWDKNLVSNLKKAIEVYASLGLEIHITELDISVFEFEDKRTDLFEPTPEMLELQAKVYEDVFAVFREYKDVITSVTLWGISDRHTWKDNFPVKGRKDWPLLFDVNGKPKEALYRILRF.

The GH10 domain maps to 11–342 (EMLNLSLAKT…KEALYRILRF (332 aa)). The active-site Proton donor is the E144. E252 serves as the catalytic Nucleophile.

It belongs to the glycosyl hydrolase 10 (cellulase F) family. Cytoplasmic xylanase subfamily.

The protein localises to the cytoplasm. The enzyme catalyses Endohydrolysis of (1-&gt;4)-beta-D-xylosidic linkages in xylans.. It functions in the pathway glycan degradation; xylan degradation. The chain is Endo-1,4-beta-xylanase A (xynA) from Caldicellulosiruptor saccharolyticus (Caldocellum saccharolyticum).